The sequence spans 412 residues: Motilin receptor (412 aa).

The Extracellular portion of the chain corresponds to 1–35 (MGSPWNGSDGPEGAREPPWPALPPCDERRCSPFPL). A glycan (N-linked (GlcNAc...) asparagine) is linked at Asn-6. The chain crosses the membrane as a helical span at residues 36 to 56 (GALVPVTAVCLCLFVVGVSGN). The Cytoplasmic segment spans residues 57–74 (VVTVMLIGRYRDMRTTTN). The helical transmembrane segment at 75 to 94 (LYLGSMAVSDLLILLGLPFD) threads the bilayer. Residues 95–112 (LYRLWRSRPWVFGPLLCR) lie on the Extracellular side of the membrane. Cys-111 and Cys-235 are disulfide-bonded. A helical membrane pass occupies residues 113–134 (LSLYVGEGCTYATLLHMTALSV). The Cytoplasmic segment spans residues 135 to 157 (ERYLAICRPLRARVLVTRRRVRA). A helical transmembrane segment spans residues 158-178 (LIAVLWAVALLSAGPFLFLVG). The Extracellular segment spans residues 179–246 (VEQDPGISVV…PSPAQLGALR (68 aa)). Asn-192 is a glycosylation site (N-linked (GlcNAc...) asparagine). A helical transmembrane segment spans residues 247–270 (VMLWVTTAYFFLPFLCLSILYGLI). The Cytoplasmic segment spans residues 271–298 (GRELWSSRRPLRGPAASGRERGHRQTVR). Residues 299 to 320 (VLLVVVLAFIICWLPFHVGRII) traverse the membrane as a helical segment. Topologically, residues 321 to 334 (YINTEDSRMMYFSQ) are extracellular. A helical transmembrane segment spans residues 335-358 (YFNIVALQLFYLSASINPILYNLI). Residues 359–412 (SKKYRAAAFKLLLARKSRPRGFHRSRDTAGEVAGDTGGDTVGYTETSANVKTMG) are Cytoplasmic-facing.

Belongs to the G-protein coupled receptor 1 family. As to expression, expressed only in thyroid, stomach, and bone marrow.

The protein localises to the cell membrane. In terms of biological role, receptor for motilin. The sequence is that of Motilin receptor (MLNR) from Homo sapiens (Human).